A 1132-amino-acid chain; its full sequence is Phytochrome B (1132 aa).

Positions 1-11 (MASGSRTKHSH) are enriched in basic residues. Positions 1–27 (MASGSRTKHSHQSGQGQVQAQSSGTSN) are disordered. Positions 12–26 (QSGQGQVQAQSSGTS) are enriched in low complexity. The GAF domain maps to 231 to 409 (DVKLLCDTVV…AFGLQLNMEL (179 aa)). C336 lines the phytochromobilin pocket. PAS domains follow at residues 623-694 (VARE…LRGE) and 757-828 (DYKA…MIVL). One can recognise a Histidine kinase domain in the interval 905 to 1125 (YLCQEIKSPL…LIILDLPMTR (221 aa)).

It belongs to the phytochrome family. In terms of assembly, homodimer. Contains one covalently linked phytochromobilin chromophore.

Functionally, regulatory photoreceptor which exists in two forms that are reversibly interconvertible by light: the Pr form that absorbs maximally in the red region of the spectrum and the Pfr form that absorbs maximally in the far-red region. Photoconversion of Pr to Pfr induces an array of morphogenic responses, whereas reconversion of Pfr to Pr cancels the induction of those responses. Pfr controls the expression of a number of nuclear genes including those encoding the small subunit of ribulose-bisphosphate carboxylase, chlorophyll A/B binding protein, protochlorophyllide reductase, rRNA, etc. It also controls the expression of its own gene(s) in a negative feedback fashion. The polypeptide is Phytochrome B (PHYB) (Nicotiana tabacum (Common tobacco)).